Here is a 488-residue protein sequence, read N- to C-terminus: Probable phenylalanine--tRNA ligase alpha subunit (488 aa).

A contains the major tRNA-Phe binding sites region spans residues 1 to 146; the sequence is MSIEQDILNL…KRKLVDINKK (146 aa). L-phenylalanine contacts are provided by residues T315, 363-365, and Y403; that span reads QVE. E405 is a binding site for Mg(2+). Position 429 (F429) interacts with L-phenylalanine.

It belongs to the class-II aminoacyl-tRNA synthetase family. Phe-tRNA synthetase alpha subunit type 2 subfamily. Tetramer of two alpha and two beta subunits. Requires Mg(2+) as cofactor.

Its subcellular location is the cytoplasm. It carries out the reaction tRNA(Phe) + L-phenylalanine + ATP = L-phenylalanyl-tRNA(Phe) + AMP + diphosphate + H(+). This Enterocytozoon bieneusi (strain H348) (Microsporidian parasite) protein is Probable phenylalanine--tRNA ligase alpha subunit.